Here is a 371-residue protein sequence, read N- to C-terminus: MKLDHLVLKNYRNYAAVDTTFSPEINVLIGANAQGKTNLLESIYVLALARSHRTNNDKELIRFGSEFARVSGQVSRQSGSHQLELIISHQGKRARIDRIEQPKLSQYLGHFNVILFAPEDLAIVKGSPAGRRRFIDMEFGQMSPKYLYNLSQYKTFLKQRNAYLKQLKYHQAKDLVYLDVLTDSLAAFGAELITARAKLLETMSDYAATIQQDITKGRESLHFSYQTQVDPSLRGDSEQVYTALGEMFAKQQAREIEQGTSLVGPQRDDVLFIVNDKDVANFGSQGQQRTTALAVKLAEIDLMKDQTGEYPVLLLDDVLSELDAARQTHLLKAIQTKVQTFLTTTSLEGIQKEIIATPAVFKVDEGTLARA.

30-37 (GANAQGKT) is a binding site for ATP.

Belongs to the RecF family.

The protein localises to the cytoplasm. The RecF protein is involved in DNA metabolism; it is required for DNA replication and normal SOS inducibility. RecF binds preferentially to single-stranded, linear DNA. It also seems to bind ATP. The polypeptide is DNA replication and repair protein RecF (Lacticaseibacillus casei (strain BL23) (Lactobacillus casei)).